The chain runs to 555 residues: Formate--tetrahydrofolate ligase (555 aa).

65 to 72 (TPAGEGKS) is an ATP binding site.

This sequence belongs to the formate--tetrahydrofolate ligase family.

The catalysed reaction is (6S)-5,6,7,8-tetrahydrofolate + formate + ATP = (6R)-10-formyltetrahydrofolate + ADP + phosphate. It functions in the pathway one-carbon metabolism; tetrahydrofolate interconversion. The chain is Formate--tetrahydrofolate ligase from Staphylococcus haemolyticus (strain JCSC1435).